The following is a 380-amino-acid chain: Cytochrome b (380 aa).

A run of 4 helical transmembrane segments spans residues 33–53 (FGSL…FLAM), 77–98 (WLIR…YLHI), 113–133 (WNIG…GYVL), and 178–198 (FFAF…LHLL). 2 residues coordinate heme b: H83 and H97. 2 residues coordinate heme b: H182 and H196. Residue H201 coordinates a ubiquinone. The next 4 membrane-spanning stretches (helical) occupy residues 226–246 (YKDL…ALFT), 288–308 (LGGV…PILH), 320–340 (VTQF…WIGG), and 347–367 (YIII…LIMP).

This sequence belongs to the cytochrome b family. In terms of assembly, the cytochrome bc1 complex contains 3 respiratory subunits (MT-CYB, CYC1 and UQCRFS1), 2 core proteins (UQCRC1 and UQCRC2) and probably 6 low-molecular weight proteins. Heme b is required as a cofactor.

The protein resides in the mitochondrion inner membrane. In terms of biological role, component of the ubiquinol-cytochrome c reductase complex (complex III or cytochrome b-c1 complex) that is part of the mitochondrial respiratory chain. The b-c1 complex mediates electron transfer from ubiquinol to cytochrome c. Contributes to the generation of a proton gradient across the mitochondrial membrane that is then used for ATP synthesis. The protein is Cytochrome b (mt-cyb) of Pagrus major (Red sea bream).